The sequence spans 486 residues: Glucose-6-phosphate 1-dehydrogenase (486 aa).

NADP(+)-binding positions include 13–20 (GGTGDLAK), R47, 86–87 (DV), and K149. Residues H179, K183, E217, and D236 each coordinate substrate. H241 acts as the Proton acceptor in catalysis. Substrate-binding residues include K339 and K344.

This sequence belongs to the glucose-6-phosphate dehydrogenase family. In terms of assembly, homodimer.

It carries out the reaction D-glucose 6-phosphate + NAD(+) = 6-phospho-D-glucono-1,5-lactone + NADH + H(+). The enzyme catalyses D-glucose 6-phosphate + NADP(+) = 6-phospho-D-glucono-1,5-lactone + NADPH + H(+). It functions in the pathway carbohydrate degradation; pentose phosphate pathway; D-ribulose 5-phosphate from D-glucose 6-phosphate (oxidative stage): step 1/3. Catalyzes the oxidation of glucose 6-phosphate to 6-phosphogluconolactone. Can utilize either NADP(+) or NAD(+). In Leuconostoc mesenteroides, this protein is Glucose-6-phosphate 1-dehydrogenase.